Reading from the N-terminus, the 384-residue chain is DNA polymerase IV (384 aa).

Positions 5–182 (IIHVDMDAFF…LPVTKVHGIG (178 aa)) constitute a UmuC domain. D9, M10, and D103 together coordinate Mg(2+). The active site involves E104.

The protein belongs to the DNA polymerase type-Y family. Monomer. Mg(2+) serves as cofactor.

It localises to the cytoplasm. It carries out the reaction DNA(n) + a 2'-deoxyribonucleoside 5'-triphosphate = DNA(n+1) + diphosphate. Poorly processive, error-prone DNA polymerase involved in translesion repair and untargeted mutagenesis. Copies undamaged DNA at stalled replication forks, which arise in vivo from mismatched or misaligned primer ends. These misaligned primers can be extended by PolIV. Exhibits no 3'-5' exonuclease (proofreading) activity. Involved in translesional synthesis. Primer extension fidelity in vitro is temperature-dependent. Inserts a correct base opposite templating bases at 70 degrees Celsius, but at 37 degrees Celsius in addition to correct base pairing, base transitions, transversions and frameshifts can occur. Preferably forms erroneous base pairs C:T. Bypasses 8-oxo-dG oxidative damage by incorporating dATP or dCTP opposite of the damaged DNA template site at both temperatures in vitro. The protein is DNA polymerase IV of Caldanaerobacter subterraneus subsp. tengcongensis (strain DSM 15242 / JCM 11007 / NBRC 100824 / MB4) (Thermoanaerobacter tengcongensis).